The sequence spans 226 residues: Orotate phosphoribosyltransferase (226 aa).

K30 contributes to the 5-phospho-alpha-D-ribose 1-diphosphate binding site. 38-39 (FF) is an orotate binding site. 5-phospho-alpha-D-ribose 1-diphosphate is bound by residues 76–77 (YK), R106, K107, K110, H112, and 132–140 (DDVMTAGTA). Orotate is bound by residues T136 and R164.

Belongs to the purine/pyrimidine phosphoribosyltransferase family. PyrE subfamily. As to quaternary structure, homodimer.

It carries out the reaction orotidine 5'-phosphate + diphosphate = orotate + 5-phospho-alpha-D-ribose 1-diphosphate. It participates in pyrimidine metabolism; UMP biosynthesis via de novo pathway; UMP from orotate: step 1/2. Catalyzes the transfer of a ribosyl phosphate group from 5-phosphoribose 1-diphosphate to orotate, leading to the formation of orotidine monophosphate (OMP). This chain is Orotate phosphoribosyltransferase (URA5), found in Kluyveromyces lactis (strain ATCC 8585 / CBS 2359 / DSM 70799 / NBRC 1267 / NRRL Y-1140 / WM37) (Yeast).